A 154-amino-acid chain; its full sequence is 6,7-dimethyl-8-ribityllumazine synthase (154 aa).

5-amino-6-(D-ribitylamino)uracil-binding positions include tryptophan 22, alanine 56–glutamate 58, and cysteine 80–valine 82. Aspartate 85–threonine 86 contributes to the (2S)-2-hydroxy-3-oxobutyl phosphate binding site. Histidine 88 functions as the Proton donor in the catalytic mechanism. Asparagine 113 contributes to the 5-amino-6-(D-ribitylamino)uracil binding site. (2S)-2-hydroxy-3-oxobutyl phosphate is bound at residue arginine 127.

The protein belongs to the DMRL synthase family. Forms an icosahedral capsid composed of 60 subunits, arranged as a dodecamer of pentamers.

The enzyme catalyses (2S)-2-hydroxy-3-oxobutyl phosphate + 5-amino-6-(D-ribitylamino)uracil = 6,7-dimethyl-8-(1-D-ribityl)lumazine + phosphate + 2 H2O + H(+). It participates in cofactor biosynthesis; riboflavin biosynthesis; riboflavin from 2-hydroxy-3-oxobutyl phosphate and 5-amino-6-(D-ribitylamino)uracil: step 1/2. Functionally, catalyzes the formation of 6,7-dimethyl-8-ribityllumazine by condensation of 5-amino-6-(D-ribitylamino)uracil with 3,4-dihydroxy-2-butanone 4-phosphate. This is the penultimate step in the biosynthesis of riboflavin. This chain is 6,7-dimethyl-8-ribityllumazine synthase, found in Xylella fastidiosa (strain 9a5c).